The chain runs to 226 residues: PKHD-type hydroxylase PP_0862 (226 aa).

Residues 78 to 178 (KVFPPLINCY…RYAAFFWTQS (101 aa)) form the Fe2OG dioxygenase domain. Residues His-96, Asp-98, and His-159 each coordinate Fe cation. Arg-169 is a binding site for 2-oxoglutarate.

Requires Fe(2+) as cofactor. It depends on L-ascorbate as a cofactor.

The chain is PKHD-type hydroxylase PP_0862 from Pseudomonas putida (strain ATCC 47054 / DSM 6125 / CFBP 8728 / NCIMB 11950 / KT2440).